Consider the following 315-residue polypeptide: Ribosomal protein L11 methyltransferase (315 aa).

Thr-161, Gly-182, Asp-204, and Asn-248 together coordinate S-adenosyl-L-methionine.

It belongs to the methyltransferase superfamily. PrmA family.

Its subcellular location is the cytoplasm. It catalyses the reaction L-lysyl-[protein] + 3 S-adenosyl-L-methionine = N(6),N(6),N(6)-trimethyl-L-lysyl-[protein] + 3 S-adenosyl-L-homocysteine + 3 H(+). In terms of biological role, methylates ribosomal protein L11. The chain is Ribosomal protein L11 methyltransferase from Shouchella clausii (strain KSM-K16) (Alkalihalobacillus clausii).